Here is a 395-residue protein sequence, read N- to C-terminus: MKRFLLCSFALVLLYPAGIDMYLVGLPRIAADLNASEAQLHIAFSVYLAGMATAMLFAGKIADQSGRKPVAIVGALVFMMASLLCSRASEGSLFLSGRFLQGVGAGGCYVVAFAILRDTLDEHRRAKVLSLLNGITCIVPVLAPVVGHLIMLRFPWQSLFYTMSAMGIIVGLLSLFILRETRPARLAPRDLSRSSPAAESLVNRFFVSRLAITTLSVSVILTFVNASPVLLMEVMGFSRGDYAITMALTAGVSMVVSFSTPFALGLFKPRTLMLVSQGLFLTAGVTLSLAHTNTVTLFGLTLICAGFSVGFGVAMSQALGPFSLRAGVASSTLGIAQVCGSSLWIWLAAILGISAMNMLIGILIGCSIVSILLIFSVAPNRSVAEHEEIPYQSRS.

The next 12 membrane-spanning stretches (helical) occupy residues 4–24 (FLLC…MYLV), 42–62 (IAFS…GKIA), 69–89 (PVAI…SRAS), 93–113 (LFLS…VVAF), 131–151 (LLNG…HLIM), 158–178 (SLFY…LFIL), 217–237 (VSVI…VMGF), 247–267 (ALTA…LGLF), 271–291 (TLML…SLAH), 295–315 (VTLF…GVAM), 333–353 (LGIA…ILGI), and 358–378 (MLIG…FSVA).

Belongs to the major facilitator superfamily. DHA1 family. MdtL (TC 2.A.1.2.22) subfamily.

The protein resides in the cell inner membrane. The polypeptide is Multidrug resistance protein MdtL (Salmonella agona (strain SL483)).